The primary structure comprises 463 residues: MNHLTTLDAGFLKAEDVDRHVSLAIGALAVIEGPAPDQEAFLSSLAQRLRPCTRFGQRLRLRPFDLGAPKWVDDPDFDLGRHVWRIALPRPGNEDQLFELIADLMARRLDRGRPLWEVWVIEGLADSKWAILTKLHHCMADGIAATHLLAGLSDESMSDSFASNIHTTMQSQSASVRRGGFRVNPSEALTASTAVMAGIVRAAKGASEIAAGVLSPAASSLNGPISDLRRYSAAKVPLADVEQVCRKFDVTINDVALAAITESYRNVFIQRGERPRFDSLRTLVPVSTRSNSALSKTDNRVSLMLPNLPVDQENPLQRLRIVHSRLTRAKAGGQRQFGNTLMAIANRLPFPMTAWAVGLLMRLPQRGVVTVATNVPGPRRPLQIMGRRVLDLYPVSPIAMQLRTSVAMLSYADDLYFGILADYDVVADAGQLARGIEDAVARLVAISKRRKVTRRRGALSLVV.

H137 serves as the catalytic Proton acceptor.

The protein belongs to the long-chain O-acyltransferase family.

The enzyme catalyses an acyl-CoA + a 1,2-diacyl-sn-glycerol = a triacyl-sn-glycerol + CoA. It functions in the pathway glycerolipid metabolism; triacylglycerol biosynthesis. Its function is as follows. Catalyzes the terminal and only committed step in triacylglycerol synthesis by using diacylglycerol and fatty acyl CoA as substrates. Required for storage lipid synthesis. The sequence is that of Probable diacyglycerol O-acyltransferase tgs1 (tgs1) from Mycobacterium tuberculosis (strain CDC 1551 / Oshkosh).